Consider the following 243-residue polypeptide: MGHKIHPTGLRLGITQEHRSRWYASSKSYPTLLKEDDRIRKFIHKKYGSAGISDVLIARKADQLEVELKTARPGVLVGRQGSGIEELRSGIQKTVGDPNRQVRINVVEVERVDADAFLLAEYIAQQLEKRVAFRRTIRMAVQRAQRAGVLGLKIQVSGRLNGAEIARTEWTREGRVPLHTLRADIDYATKVASTTYGVLGIKVWVFKGEVLGDEAQQQLPVGATPRRRAGRRPQQFEDRSNEG.

The KH type-2 domain occupies 39-110 (IRKFIHKKYG…QVRINVVEVE (72 aa)). Residues 217 to 243 (QQLPVGATPRRRAGRRPQQFEDRSNEG) form a disordered region. Residues 234-243 (QQFEDRSNEG) are compositionally biased toward basic and acidic residues.

Belongs to the universal ribosomal protein uS3 family. In terms of assembly, part of the 30S ribosomal subunit. Forms a tight complex with proteins S10 and S14.

In terms of biological role, binds the lower part of the 30S subunit head. Binds mRNA in the 70S ribosome, positioning it for translation. In Synechococcus sp. (strain WH7803), this protein is Small ribosomal subunit protein uS3.